The chain runs to 220 residues: UPF0319 protein YccT (220 aa).

The N-terminal stretch at 1 to 20 (MKTGIVTTLIALCLPVSVFA) is a signal peptide.

The protein belongs to the UPF0319 family.

The polypeptide is UPF0319 protein YccT (Shigella flexneri serotype 5b (strain 8401)).